A 407-amino-acid polypeptide reads, in one-letter code: 1-deoxy-D-xylulose 5-phosphate reductoisomerase (407 aa).

NADPH-binding residues include Thr-22, Gly-23, Ser-24, Ile-25, Gly-48, Asn-51, and Asn-128. Lys-129 serves as a coordination point for 1-deoxy-D-xylulose 5-phosphate. Glu-130 contributes to the NADPH binding site. Residue Asp-152 coordinates Mn(2+). 1-deoxy-D-xylulose 5-phosphate-binding residues include Ser-153, Glu-154, Ser-178, and His-201. Glu-154 contacts Mn(2+). Gly-207 serves as a coordination point for NADPH. Ser-214, Asn-219, Lys-220, and Glu-223 together coordinate 1-deoxy-D-xylulose 5-phosphate. Residue Glu-223 coordinates Mn(2+).

It belongs to the DXR family. Requires Mg(2+) as cofactor. The cofactor is Mn(2+).

It catalyses the reaction 2-C-methyl-D-erythritol 4-phosphate + NADP(+) = 1-deoxy-D-xylulose 5-phosphate + NADPH + H(+). It functions in the pathway isoprenoid biosynthesis; isopentenyl diphosphate biosynthesis via DXP pathway; isopentenyl diphosphate from 1-deoxy-D-xylulose 5-phosphate: step 1/6. Catalyzes the NADPH-dependent rearrangement and reduction of 1-deoxy-D-xylulose-5-phosphate (DXP) to 2-C-methyl-D-erythritol 4-phosphate (MEP). In Mycobacterium avium (strain 104), this protein is 1-deoxy-D-xylulose 5-phosphate reductoisomerase.